Here is a 367-residue protein sequence, read N- to C-terminus: Acryloyl-CoA reductase electron transfer subunit beta (367 aa).

An FAD-binding site is contributed by 305–333 (VYVALGISGAIQHKAGMQDSELIIAVNKD).

As to quaternary structure, heterohexadecamer; tetramer of tetramers. Each tetramer is composed of 2 alpha (AcrC), a beta (AcrA) and a gamma (AcrB) subunit.

Its subcellular location is the cytoplasm. In terms of biological role, part of the ETF-acryloyl-CoA reductase complex involved in the pathway of L-alanine fermentation. The electron transfer flavoprotein (ETF) serves as a specific electron acceptor for acryloyl-CoA reductase. This is Acryloyl-CoA reductase electron transfer subunit beta (acrA) from Anaerotignum propionicum (Clostridium propionicum).